The chain runs to 620 residues: NADPH-dependent diflavin oxidoreductase 1 (620 aa).

A Flavodoxin-like domain is found at 6–168 (IAILYGSETG…VYSEFEKRVL (163 aa)). FMN contacts are provided by residues 12–17 (SETGTA), 59–62 (STTG), and 106–115 (LGDSSYSKFN). The FAD-binding FR-type domain maps to 222–475 (SSVKYGTVVT…LLPAGKQDRP (254 aa)). FAD contacts are provided by residues Arg380, 410–413 (RFFS), and 442–445 (GLCT). 535–536 (SR) lines the NADP(+) pocket. Trp620 lines the FAD pocket.

Belongs to the NADPH-dependent diflavin oxidoreductase NDOR1 family. This sequence in the N-terminal section; belongs to the flavodoxin family. It in the C-terminal section; belongs to the flavoprotein pyridine nucleotide cytochrome reductase family. Interacts with DRE2; as part of the cytosolic iron-sulfur (Fe-S) protein assembly (CIA) machinery. FAD serves as cofactor. Requires FMN as cofactor.

The protein localises to the cytoplasm. It is found in the mitochondrion. The enzyme catalyses 2 oxidized [2Fe-2S]-[protein] + NADPH = 2 reduced [2Fe-2S]-[protein] + NADP(+) + H(+). NADPH-dependent reductase which is a central component of the cytosolic iron-sulfur (Fe-S) protein assembly (CIA) machinery. Transfers electrons from NADPH via its FAD and FMN prosthetic groups to the [2Fe-2S] cluster of DRE2, another key component of the CIA machinery. In turn, this reduced cluster provides electrons for assembly of cytosolic iron-sulfur cluster proteins. Positively controls H(2)O(2)-induced cell death. The polypeptide is NADPH-dependent diflavin oxidoreductase 1 (Eremothecium gossypii (strain ATCC 10895 / CBS 109.51 / FGSC 9923 / NRRL Y-1056) (Yeast)).